Here is a 200-residue protein sequence, read N- to C-terminus: Lipopolysaccharide core heptose(II)-phosphate phosphatase (200 aa).

A signal peptide spans 1-25 (MLAFCRSSLKSKKYFIILLALAAIA).

Belongs to the phosphoglycerate mutase family. Ais subfamily.

Its subcellular location is the periplasm. It participates in bacterial outer membrane biogenesis; lipopolysaccharide metabolism. Functionally, catalyzes the dephosphorylation of heptose(II) of the outer membrane lipopolysaccharide core. This chain is Lipopolysaccharide core heptose(II)-phosphate phosphatase, found in Escherichia coli O157:H7 (strain EC4115 / EHEC).